Reading from the N-terminus, the 220-residue chain is Ribose-5-phosphate isomerase A (220 aa).

Residues 28 to 31 (TGST), 81 to 84 (DGAD), and 94 to 97 (KGGG) contribute to the substrate site. The active-site Proton acceptor is E103. Residue K121 coordinates substrate.

It belongs to the ribose 5-phosphate isomerase family. As to quaternary structure, homodimer.

It carries out the reaction aldehydo-D-ribose 5-phosphate = D-ribulose 5-phosphate. Its pathway is carbohydrate degradation; pentose phosphate pathway; D-ribose 5-phosphate from D-ribulose 5-phosphate (non-oxidative stage): step 1/1. Catalyzes the reversible conversion of ribose-5-phosphate to ribulose 5-phosphate. The protein is Ribose-5-phosphate isomerase A of Vesicomyosocius okutanii subsp. Calyptogena okutanii (strain HA).